A 484-amino-acid chain; its full sequence is MADKIERHTFKVFNQDFSVDKRFQLIKEIGHGAYGIVCSARFAEAAEDTTVAIKKVTNVFSKTLLCKRSLRELKLLRHFRGHKNITCLYDMDIVFYPDGSINGLYLYEELMECDMHQIIKSGQPLTDAHYQSFTYQILCGLKYIHSADVLHRDLKPGNLLVNADCQLKICDFGLARGYSENPVENSQFLTEYVATRWYRAPEIMLSYQGYTKAIDVWSAGCILAEFLGGKPIFKGKDYVNQLNQILQVLGTPPDETLRRIGSKNVQDYIHQLGFIPKVPFVNLYPNANSQALDLLEQMLAFDPQKRITVDEALEHPYLSIWHDPADEPVCSEKFEFSFESVNDMEDLKQMVIQEVQDFRLFVRQPLLEEQRQLQLQQQQQQQQQQQQQQQQPSDVDNGNAAASEENYPKQMATSNSVAPQQESFGIHSQNLPRHDADFPPRPQESMMEMRPATGNTADIPPQNDNGTLLDLEKELEFGLDRKYF.

One can recognise a Protein kinase domain in the interval 23 to 318 (FQLIKEIGHG…VDEALEHPYL (296 aa)). ATP contacts are provided by residues 29–37 (IGHGAYGIV) and K54. D153 acts as the Proton acceptor in catalysis. Position 190 is a phosphothreonine (T190). The TXY signature appears at 190–192 (TEY). At Y192 the chain carries Phosphotyrosine. A compositionally biased stretch (low complexity) spans 383–392 (QQQQQQQQQP). 2 disordered regions span residues 383-403 (QQQQ…AAAS) and 426-464 (IHSQ…PQND).

It belongs to the protein kinase superfamily. CMGC Ser/Thr protein kinase family. MAP kinase subfamily. In terms of assembly, interacts with RLM1. The cofactor is Mg(2+). Dually phosphorylated on Thr-190 and Tyr-192, which activates the enzyme.

It catalyses the reaction L-seryl-[protein] + ATP = O-phospho-L-seryl-[protein] + ADP + H(+). It carries out the reaction L-threonyl-[protein] + ATP = O-phospho-L-threonyl-[protein] + ADP + H(+). Activated by tyrosine and threonine phosphorylation by MKK1 and MKK2. Serine/threonine protein kinase involved in a signal transduction pathway that plays a role in yeast cell morphogenesis and cell growth. This pathway seems to start by SMP3; then involve the kinase PKC1 that may act the BCK1 kinase that then phosphorylates MKK1 and MKK2 which themselves phosphorylate the SLT2/MPK1 kinase which itself then phosphorylates and activates the transcription factor RLM1. Directly phosphorylates BCY1 upon TOR complex 1 (TORC1) inhibition. In Saccharomyces cerevisiae (strain ATCC 204508 / S288c) (Baker's yeast), this protein is Mitogen-activated protein kinase SLT2/MPK1 (SLT2).